We begin with the raw amino-acid sequence, 194 residues long: MHKWILTWILPTLLYRSCFHIICLVGTISLACNDMTPEQMATNVNCSSPERHTRSYDYMEGGDIRVRRLFCRTQWYLRIDKRGKVKGTQEMKNNYNIMEIRTVAVGIVAIKGVESEFYLAMNKEGKLYAKKECNEDCNFKELILENHYNTYASAKWTHNGGEMFVALNQKGIPVRGKKTKKEQKTAHFLPMAIT.

The first 31 residues, M1–A31, serve as a signal peptide directing secretion. N-linked (GlcNAc...) asparagine glycosylation is present at N45.

This sequence belongs to the heparin-binding growth factors family. In terms of assembly, interacts with FGFBP1. Interacts with FGFR2. Affinity between fibroblast growth factors (FGFs) and their receptors is increased by heparan sulfate glycosaminoglycans that function as coreceptors. As to expression, epithelial cell.

The protein resides in the secreted. Plays an important role in the regulation of embryonic development, cell proliferation and cell differentiation. Required for normal branching morphogenesis. Growth factor active on keratinocytes. Possible major paracrine effector of normal epithelial cell proliferation. In Homo sapiens (Human), this protein is Fibroblast growth factor 7 (FGF7).